The primary structure comprises 1687 residues: PH domain leucine-rich repeat-containing protein phosphatase 1 (1687 aa).

An N-acetylmethionine modification is found at Met1. 2 disordered regions span residues 1 to 96 and 230 to 406; these read MEPA…GGGA and AAAP…AAPD. The span at 78-96 shows a compositional bias: low complexity; it reads APQPAAGGAAPVPAAGGGA. Ser286 carries the phosphoserine modification. Positions 314 to 326 are enriched in polar residues; sequence DTESFSLSPSAES. Phosphoserine is present on Ser372. The 101-residue stretch at 492–592 folds into the PH domain; sequence RIQLSGMYNV…WLRQVSKVAS (101 aa). LRR repeat units lie at residues 594–615, 617–638, 648–669, 671–692, 694–715, 717–739, 740–760, 764–785, 788–809, 829–850, 851–872, 874–895, 897–918, 919–940, 943–964, 969–989, 993–1014, 1017–1038, 1040–1061, 1062–1083, and 1085–1106; these read RISS…LFYS, DLTH…PAAR, KLKS…VCSI, TLAE…VGDM, NLQT…LESM, QLSY…EKLT, AVDK…QALR, HIKH…EVDF, HVTQ…IFNN, FLKA…PVPN, YLSY…VCES, KLEV…LFCN, SLRK…LERT, SVEV…LLMK, SLRF…TLSE, ILQE…PLLT, RLKI…KMAK, ELEE…IMNC, RMHT…MQLP, EVKC…ENLP, and KLQE…SLEL. The 248-residue stretch at 1131–1378 folds into the PPM-type phosphatase domain; that stretch reads SHGYTEASGV…DSISAVVVQL (248 aa). Residues Asp1166, Gly1167, Lys1330, and Asp1369 each contribute to the Mn(2+) site. Disordered regions lie at residues 1414-1465 and 1604-1687; these read DRPS…SSPA and PGGY…DTPL. Residues 1424–1445 show a composition bias toward low complexity; sequence SSSSGMASEISSELSTSEMSSE. Over residues 1649–1669 the composition is skewed to pro residues; sequence LPPPPQPPQPQPQPQPQPQPQ. The short motif at 1685 to 1687 is the PDZ-binding element; the sequence is TPL.

In terms of assembly, interacts with the nucleotide free form of K-Ras (KRAS) via its LRR repeats. Interacts with AKT2, AKT3 and PRKCB. Interacts with WDR48 and USP12. Requires Mn(2+) as cofactor. As to expression, isoforms 1 and 2 are expressed in the retina.

The protein localises to the cytoplasm. It localises to the membrane. The protein resides in the nucleus. The enzyme catalyses O-phospho-L-seryl-[protein] + H2O = L-seryl-[protein] + phosphate. The catalysed reaction is O-phospho-L-threonyl-[protein] + H2O = L-threonyl-[protein] + phosphate. With respect to regulation, insensitive to okadaic acid. Deubiquitination by WDR48-USP12 complex positively regulates PHLPP1 stability. Functionally, protein phosphatase involved in regulation of Akt and PKC signaling. Mediates dephosphorylation in the C-terminal domain hydrophobic motif of members of the AGC Ser/Thr protein kinase family; specifically acts on 'Ser-473' of AKT2 and AKT3, 'Ser-660' of PRKCB and 'Ser-657' of PRKCA. Isoform 2 seems to have a major role in regulating Akt signaling in hippocampal neurons. Akt regulates the balance between cell survival and apoptosis through a cascade that primarily alters the function of transcription factors that regulate pro- and antiapoptotic genes. Dephosphorylation of 'Ser-473' of Akt triggers apoptosis and suppression of tumor growth. Dephosphorylation of PRKCA and PRKCB leads to their destabilization and degradation. Dephosphorylates STK4 on 'Thr-387' leading to STK4 activation and apoptosis. Dephosphorylates RPS6KB1 and is involved in regulation of cap-dependent translation. Inhibits cancer cell proliferation and may act as a tumor suppressor. Dephosphorylates RAF1 inhibiting its kinase activity. May act as a negative regulator of K-Ras signaling in membrane rafts. Involved in the hippocampus-dependent long-term memory formation. Involved in circadian control by regulating the consolidation of circadian periodicity after resetting. Involved in development and function of regulatory T-cells. In Mus musculus (Mouse), this protein is PH domain leucine-rich repeat-containing protein phosphatase 1 (Phlpp1).